We begin with the raw amino-acid sequence, 147 residues long: NADH-quinone oxidoreductase subunit A (147 aa).

The next 3 helical transmembrane spans lie at 11–31 (IWPL…VMAL), 68–88 (LIAV…AWAV), and 93–113 (LGWP…AALA).

The protein belongs to the complex I subunit 3 family. As to quaternary structure, NDH-1 is composed of 14 different subunits. Subunits NuoA, H, J, K, L, M, N constitute the membrane sector of the complex.

Its subcellular location is the cell inner membrane. The catalysed reaction is a quinone + NADH + 5 H(+)(in) = a quinol + NAD(+) + 4 H(+)(out). Its function is as follows. NDH-1 shuttles electrons from NADH, via FMN and iron-sulfur (Fe-S) centers, to quinones in the respiratory chain. The immediate electron acceptor for the enzyme in this species is believed to be ubiquinone. Couples the redox reaction to proton translocation (for every two electrons transferred, four hydrogen ions are translocated across the cytoplasmic membrane), and thus conserves the redox energy in a proton gradient. The protein is NADH-quinone oxidoreductase subunit A of Nitrosospira multiformis (strain ATCC 25196 / NCIMB 11849 / C 71).